An 811-amino-acid chain; its full sequence is Myb-like DNA-binding protein BAS1 (811 aa).

In terms of domain architecture, Myb-like spans 34–110 (HRKNGRNSWS…DVRKRWTGSL (77 aa)). HTH myb-type domains lie at 111 to 165 (DPNL…GPGS) and 166 to 218 (KGRL…TMVV). 2 DNA-binding regions (H-T-H motif) span residues 138–161 (WLSI…IEVL) and 191–214 (WRKI…RKII). The span at 237-264 (DMTDGKLRQHPIADSDIRSDSTPNKEEQ) shows a compositional bias: basic and acidic residues. Disordered stretches follow at residues 237-320 (DMTD…SAPP), 348-379 (SQMN…DEHM), 535-713 (ATSH…LRDE), and 782-811 (LHNE…LNPS). Over residues 265-275 (LQLSQQNNPSL) the composition is skewed to low complexity. The span at 282-298 (NVKENESSKLPRLKDND) shows a compositional bias: basic and acidic residues. 3 stretches are compositionally biased toward polar residues: residues 348 to 366 (SQMN…QTSL), 535 to 613 (ATSH…TSGS), and 653 to 664 (LNPSPNSVRSNG). Basic and acidic residues predominate over residues 782-794 (LHNEAKKTSEHDM).

In terms of assembly, monomer.

It localises to the nucleus. Its function is as follows. Activates HIS4 transcription only in combination with PHO2/BAS2. BAS1 is also involved in the regulation of the purine biosynthesis pathway. In Saccharomyces cerevisiae (strain ATCC 204508 / S288c) (Baker's yeast), this protein is Myb-like DNA-binding protein BAS1 (BAS1).